The chain runs to 442 residues: UDP-N-acetylmuramate--L-alanine ligase (442 aa).

Position 109–115 (109–115 (GAHGKTS)) interacts with ATP.

It belongs to the MurCDEF family.

It is found in the cytoplasm. The enzyme catalyses UDP-N-acetyl-alpha-D-muramate + L-alanine + ATP = UDP-N-acetyl-alpha-D-muramoyl-L-alanine + ADP + phosphate + H(+). The protein operates within cell wall biogenesis; peptidoglycan biosynthesis. In terms of biological role, cell wall formation. This is UDP-N-acetylmuramate--L-alanine ligase from Streptococcus pyogenes serotype M2 (strain MGAS10270).